A 1059-amino-acid chain; its full sequence is MAGRLSTADADREIHRFVTREQIDQLHEQFRARNNRLTLDELRELLAELGLFYTEDEYRTLCLQINTDHDRYCQWDELLSYLILGFQDDDPHAVKQSLDPPIAGDLCVKLRRQVYNIVKVDFCPMVYYDGSISWSQGHWITTSREGVIQYWTEDWKPALTARSVPSSLKRSKTWVLDTVPLPDLSMFCVTGLETELRLYNVVAACFTLKLVIERLPQPISAMAYRFGRDEPSRLLTGDYTGHIRMFVFHPERKVTTSGESTVTHVSLQDVLHGAYPPVECVDYGQLLPDIVRAVQFVESVGNVAELFIACAEENPLLSSARGRPRPAMVIHSLDLPAIRRIKFCVPRGVTCFAFEPSNELLVSGGPDCDLRLWDIHRPEKPSVVLVGHTSSITFLFLQDAGEKIYSLDQRKIIKVWDVRNRVLLQTFGQFSTVLVKGVPACAYYNKRARELVVASNKLFVTACCPEIALDRTDGESHTKPVSVLLYNGLYRLVVSCGFDSFIIVWDHRVNRKMTIITEAHTQIRNGVLEPVEITAACFDGKEQMLLTGARNGSLKIWNIGGRTCMRTIQIEEDCEVTGVFWQANRILAMGWNHRVVEFAAFAEQDEYPRGLQWRKQHSDDILCAAVSGSEPGVMATCSYAGELVFWMLETGQPYRRYDATNPRTRLPISFREGRADLMKPRKLTPRRSLFQMPPGQLAHRRLTRILMPSGLEQMRQLSIQALLFLAMRKMLPDRGTLFGSLDNGMVQVWSHHPDGGFKGQFNGIHMAGDRIITLATDKANRFLFTGTALGYVKTWYIENCWIPNEDKFHVNKPALRILFPFLLNDVVPGRAKRSARAQVKPWLLNSYQAHRACVTGLTYLDDTGLLLSCSSDRTVRLWTLGGRYIGLLGSPVNWQPLPMAVPPPADYRFRIPPDLQREVSFTTLKVLRGGKDSSRTARTKSGGGTATVGDIVGVAADRSKHTPMIETYGSPLAEPILNTAVLKLPSKEPMLQTIKLDRTYPSFPLYRHMVAFPVQPLKRTNKTVEENGSDWNELEQLLERTKALQFKDAPSDADAEGTQ.

WD repeat units lie at residues 121 to 161, 170 to 209, 214 to 256, 344 to 383, 387 to 426, 476 to 515, 528 to 567, 616 to 658, 714 to 759, 766 to 805, and 849 to 888; these read DFCP…ALTA, RSKT…FTLK, RLPQ…KVTT, CVPR…KPSV, GHTS…LLQT, SHTK…KMTI, LEPV…CMRT, QHSD…RRYD, MRQL…GFKG, MAGD…IPNE, and AHRA…IGLL.

In Anopheles gambiae (African malaria mosquito), this protein is WD repeat-containing protein on Y chromosome.